A 263-amino-acid polypeptide reads, in one-letter code: Uridylate kinase (263 aa).

ATP is bound at residue 29-32 (KVSG). Position 71 (G71) interacts with UMP. ATP-binding residues include G72 and R76. Residues D91 and 152 to 159 (TGNPFFTT) contribute to the UMP site. The ATP site is built by T179, Q180, Y185, and D188.

It belongs to the UMP kinase family. In terms of assembly, homohexamer.

It localises to the cytoplasm. The catalysed reaction is UMP + ATP = UDP + ADP. It functions in the pathway pyrimidine metabolism; CTP biosynthesis via de novo pathway; UDP from UMP (UMPK route): step 1/1. Its activity is regulated as follows. Inhibited by UTP. Its function is as follows. Catalyzes the reversible phosphorylation of UMP to UDP. The chain is Uridylate kinase from Maricaulis maris (strain MCS10) (Caulobacter maris).